Here is a 67-residue protein sequence, read N- to C-terminus: Cold shock protein ScoF (67 aa).

The CSD domain occupies 4–64 (GTVKWFNSEK…GQKGPQAENI (61 aa)).

The protein localises to the cytoplasm. The polypeptide is Cold shock protein ScoF (scoF) (Streptomyces coelicolor (strain ATCC BAA-471 / A3(2) / M145)).